A 396-amino-acid polypeptide reads, in one-letter code: Elongation factor Tu (396 aa).

The region spanning Lys-10–Glu-205 is the tr-type G domain. A G1 region spans residues Gly-19–Thr-26. A GTP-binding site is contributed by Gly-19 to Thr-26. Thr-26 provides a ligand contact to Mg(2+). Residues Gly-61 to Ala-65 form a G2 region. The segment at Asp-82–Gly-85 is G3. GTP is bound by residues Asp-82 to His-86 and Asn-137 to Asp-140. The interval Asn-137 to Asp-140 is G4. Positions Ser-175–Leu-177 are G5.

The protein belongs to the TRAFAC class translation factor GTPase superfamily. Classic translation factor GTPase family. EF-Tu/EF-1A subfamily. As to quaternary structure, monomer.

It localises to the cytoplasm. It catalyses the reaction GTP + H2O = GDP + phosphate + H(+). Functionally, GTP hydrolase that promotes the GTP-dependent binding of aminoacyl-tRNA to the A-site of ribosomes during protein biosynthesis. In Salinibacter ruber (strain DSM 13855 / M31), this protein is Elongation factor Tu.